The primary structure comprises 541 residues: Circadian clock oscillator protein KaiC (541 aa).

Positions 1–40 are disordered; the sequence is MNQSLGPSEPEKPQDNTAEDSTEPTPDNHRADLSELRGIP. 2 KaiC domains span residues 21–268 and 282–541; these read STEP…INIF and VRVS…EEGL. The span at 26–35 shows a compositional bias: basic and acidic residues; the sequence is PDNHRADLSE. 19 residues coordinate ATP: glycine 70, threonine 71, glycine 72, lysine 73, threonine 74, leucine 75, serine 110, lysine 245, leucine 246, arginine 247, threonine 249, histidine 251, threonine 261, threonine 311, glycine 312, threonine 313, glycine 314, lysine 315, and threonine 316. Threonine 74 contacts Mg(2+). Residues threonine 316 and glutamate 339 each coordinate Mg(2+). Tryptophan 352 lines the ATP pocket. Position 452 is a phosphoserine; by autocatalysis (serine 452). The residue at position 453 (threonine 453) is a Phosphothreonine; by autocatalysis. ATP is bound by residues arginine 472, lysine 478, methionine 479, arginine 480, serine 482, histidine 484, and lysine 486.

The protein belongs to the KaiC family. Homohexamer; hexamerization is dependent on ATP-binding. The KaiABC complex composition changes during the circadian cycle to control KaiC phosphorylation. Complexes KaiC(6), KaiA(2-4):KaiC(6), KaiB(6):KaiC(6) and KaiC(6):KaiB(6):KaiA(12) are among the most important forms, many form cooperatively. KaiC interacts with SasA, activating its autokinase function and leading to RpaA activation. Mg(2+) is required as a cofactor. Phosphorylated on serine and threonine residues by autocatalysis. Has a 4 step phosphorylation cycle; the autokinase acts first on Thr-453, then Ser-452. When Ser-452 is modified KaiC switches to an autophosphatase mode, acting first on phospho-Thr-453 then phospho-Ser-452.

The enzyme catalyses L-seryl-[protein] + ATP = O-phospho-L-seryl-[protein] + ADP + H(+). It catalyses the reaction L-threonyl-[protein] + ATP = O-phospho-L-threonyl-[protein] + ADP + H(+). It carries out the reaction ATP + H2O = ADP + phosphate + H(+). The interaction with KaiA enhances its phosphorylation status, while the interaction with KaiB decreases it. In terms of biological role, central component of the KaiABC oscillator complex, which constitutes the main circadian regulator in cyanobacteria. Complex composition changes during the circadian cycle to control KaiC phosphorylation. KaiA stimulates KaiC autophosphorylation, while KaiB sequesters KaiA, leading to KaiC autodephosphorylation. Clock output pathways impact the RpaA transcriptional regulator. KaiC enhances the autophosphorylation activity of SasA, which then transfers its phosphate group to RpaA to activate it. KaiB and KaiC together enhance the phospho-RpaA dephosphatase activity of CikA. Its function is as follows. Has a weak, temperature-independent ATPase activity; ATPase activity defines the circadian period. The phosphorylation state of KaiC modulates its ATPase activity and effects KaiB binding. This chain is Circadian clock oscillator protein KaiC, found in Parathermosynechococcus lividus (Thermostichus lividus).